Consider the following 131-residue polypeptide: uncharacterized protein (131 aa).

The interval 16–71 (MSEQERDEVLEDDDDDEDNKSSQQERDEFVEDDDNNSIQSSPSCAQPLLTQYHDDG) is disordered. Positions 20-33 (ERDEVLEDDDDDED) are enriched in acidic residues.

This is an uncharacterized protein from Dictyostelium discoideum (Social amoeba).